An 854-amino-acid polypeptide reads, in one-letter code: DNA mismatch repair protein MutS (854 aa).

The tract at residues 1–21 (MTASDIQPTEPHTPPTPHADT) is disordered. 658-665 (GPNASGKS) is a binding site for ATP.

The protein belongs to the DNA mismatch repair MutS family.

This protein is involved in the repair of mismatches in DNA. It is possible that it carries out the mismatch recognition step. This protein has a weak ATPase activity. The chain is DNA mismatch repair protein MutS from Trichormus variabilis (strain ATCC 29413 / PCC 7937) (Anabaena variabilis).